The sequence spans 139 residues: Putative pre-16S rRNA nuclease (139 aa).

Belongs to the YqgF nuclease family.

It localises to the cytoplasm. In terms of biological role, could be a nuclease involved in processing of the 5'-end of pre-16S rRNA. The protein is Putative pre-16S rRNA nuclease of Streptococcus mutans serotype c (strain ATCC 700610 / UA159).